The chain runs to 366 residues: MKKSSSLALGNFFKTKKQILKADIQKLIKTNQINYVDPKHGTALNRAIKLKDEKIITELLAKKVDINEAIYFAIGHEYTLEEIKTLISLSSSELPDEYLYKAVHQGRLDLVQYFIEEKNFDVNTTINNPLHGGAILSIATMGEHIDVINYLLKNGAIASQGVISAILKGNIEILEKLFEYGATAHDGYSEDLVALLVNAAIPANDPTYCKSSNSETKEDLSNYVETLKFLLEHGGNPNAEFLERGTVILIALSALMDEPKNDTYKDICKLLIQYGADTSKFKSYTETINNLKKEIIEDMKVVDKSDFKDEGYVSDSAEADQLSKKGSKLVDTSSKSVFFSLEEIIEKNPTTLGGETDIVKSEFFNS.

6 ANK repeats span residues 39–68 (KHGT…DINE), 94–124 (LPDE…DVNT), 131–160 (HGGA…IASQ), 162–186 (VISA…TAHD), 210–239 (KSSN…NPNA), and 250–280 (IALS…DTSK).

The chain is Putative ankyrin repeat protein RBE_0601 from Rickettsia bellii (strain RML369-C).